The sequence spans 365 residues: Putative chalcone synthase (365 aa).

The active site involves Cys-144.

The protein belongs to the thiolase-like superfamily. Chalcone/stilbene synthases family.

It carries out the reaction (E)-4-coumaroyl-CoA + 3 malonyl-CoA + 3 H(+) = 2',4,4',6'-tetrahydroxychalcone + 3 CO2 + 4 CoA. The polypeptide is Putative chalcone synthase (bcsA) (Bacillus subtilis (strain 168)).